Reading from the N-terminus, the 577-residue chain is Jasmonoyl--L-amino acid synthetase JAR4 (577 aa).

Ser99 contacts ATP. Ser102 lines the jasmonate pocket. ATP is bound by residues Met119, Thr122, Gly163, Asn168, and 331–336 (GSSEGW). 166–170 (TTNVY) lines the an L-alpha-amino acid pocket. 328–331 (ADYG) is a binding site for jasmonate. An an L-alpha-amino acid-binding site is contributed by 531–535 (KILDH).

Belongs to the IAA-amido conjugating enzyme family.

The catalysed reaction is a jasmonate + an L-alpha-amino acid + ATP = a jasmonyl-L-amino acid + AMP + diphosphate + H(+). Catalyzes the synthesis of jasmonate-amino acid conjugates by adenylation. Catalyzes the conjugation of jasmonate (JA) to Ile, Leu and Val. Catalyzes the conjugation of jasmonate (JA) to Ile to mediate defense signaling and resistance to the herbivore Manduca sexta caterpillars. The chain is Jasmonoyl--L-amino acid synthetase JAR4 from Nicotiana attenuata (Coyote tobacco).